Reading from the N-terminus, the 285-residue chain is Polyamine aminopropyltransferase (285 aa).

Residues 5-238 (EMWYETLHTG…GIMTFAWASD (234 aa)) enclose the PABS domain. Glutamine 33 contributes to the S-methyl-5'-thioadenosine binding site. 2 residues coordinate spermidine: histidine 64 and aspartate 88. Residues glutamate 108 and 140–141 (DG) each bind S-methyl-5'-thioadenosine. The Proton acceptor role is filled by aspartate 158. 158–161 (DCTD) contacts spermidine. Proline 165 contributes to the S-methyl-5'-thioadenosine binding site.

The protein belongs to the spermidine/spermine synthase family. As to quaternary structure, homodimer or homotetramer.

It is found in the cytoplasm. It carries out the reaction S-adenosyl 3-(methylsulfanyl)propylamine + putrescine = S-methyl-5'-thioadenosine + spermidine + H(+). It participates in amine and polyamine biosynthesis; spermidine biosynthesis; spermidine from putrescine: step 1/1. Its function is as follows. Catalyzes the irreversible transfer of a propylamine group from the amino donor S-adenosylmethioninamine (decarboxy-AdoMet) to putrescine (1,4-diaminobutane) to yield spermidine. The chain is Polyamine aminopropyltransferase from Erwinia tasmaniensis (strain DSM 17950 / CFBP 7177 / CIP 109463 / NCPPB 4357 / Et1/99).